The primary structure comprises 585 residues: A-type ATP synthase subunit A (585 aa).

231-238 (GPFGSGKT) lines the ATP pocket.

The protein belongs to the ATPase alpha/beta chains family. In terms of assembly, has multiple subunits with at least A(3), B(3), C, D, E, F, H, I and proteolipid K(x).

It is found in the cell membrane. The catalysed reaction is ATP + H2O + 4 H(+)(in) = ADP + phosphate + 5 H(+)(out). Functionally, component of the A-type ATP synthase that produces ATP from ADP in the presence of a proton gradient across the membrane. The A chain is the catalytic subunit. The protein is A-type ATP synthase subunit A of Thermococcus gammatolerans (strain DSM 15229 / JCM 11827 / EJ3).